The chain runs to 368 residues: Phosphoserine aminotransferase (368 aa).

Arginine 44 lines the L-glutamate pocket. Pyridoxal 5'-phosphate is bound by residues 78–79 (AT), tryptophan 104, threonine 157, aspartate 179, and glutamine 202. Position 203 is an N6-(pyridoxal phosphate)lysine (lysine 203). 244–245 (NT) lines the pyridoxal 5'-phosphate pocket.

Belongs to the class-V pyridoxal-phosphate-dependent aminotransferase family. SerC subfamily. As to quaternary structure, homodimer. The cofactor is pyridoxal 5'-phosphate.

It localises to the cytoplasm. It carries out the reaction O-phospho-L-serine + 2-oxoglutarate = 3-phosphooxypyruvate + L-glutamate. The catalysed reaction is 4-(phosphooxy)-L-threonine + 2-oxoglutarate = (R)-3-hydroxy-2-oxo-4-phosphooxybutanoate + L-glutamate. Its pathway is amino-acid biosynthesis; L-serine biosynthesis; L-serine from 3-phospho-D-glycerate: step 2/3. It participates in cofactor biosynthesis; pyridoxine 5'-phosphate biosynthesis; pyridoxine 5'-phosphate from D-erythrose 4-phosphate: step 3/5. Its function is as follows. Catalyzes the reversible conversion of 3-phosphohydroxypyruvate to phosphoserine and of 3-hydroxy-2-oxo-4-phosphonooxybutanoate to phosphohydroxythreonine. This Neisseria gonorrhoeae (strain ATCC 700825 / FA 1090) protein is Phosphoserine aminotransferase.